The primary structure comprises 314 residues: DNA-directed RNA polymerase subunit alpha (314 aa).

The tract at residues 1–228 (MIEIEKPKIE…EHLNIFVGLT (228 aa)) is alpha N-terminal domain (alpha-NTD). The alpha C-terminal domain (alpha-CTD) stretch occupies residues 246–314 (EKVLEMTIEE…ELGLGLRKDD (69 aa)).

Belongs to the RNA polymerase alpha chain family. In terms of assembly, homodimer. The RNAP catalytic core consists of 2 alpha, 1 beta, 1 beta' and 1 omega subunit. When a sigma factor is associated with the core the holoenzyme is formed, which can initiate transcription.

It carries out the reaction RNA(n) + a ribonucleoside 5'-triphosphate = RNA(n+1) + diphosphate. Its function is as follows. DNA-dependent RNA polymerase catalyzes the transcription of DNA into RNA using the four ribonucleoside triphosphates as substrates. This chain is DNA-directed RNA polymerase subunit alpha, found in Bacillus pumilus (strain SAFR-032).